A 367-amino-acid chain; its full sequence is Ataxin-7-like protein 3 (367 aa).

Residues 84-105 form an SGF11-type zinc finger; the sequence is CVCPNCSRSIAASRFAPHLEKC. Low complexity predominate over residues 116–125; that stretch reads ANRRIASSNN. Residues 116-184 are disordered; it reads ANRRIASSNN…GELSGSVNPD (69 aa). Over residues 132–141 the composition is skewed to acidic residues; it reads DQEDNDDIND. The 68-residue stretch at 199–266 folds into the SCA7 domain; that stretch reads LGPEELRSIL…TMLENEAYEP (68 aa). Positions 280 to 299 are enriched in low complexity; it reads ASSDISPSDSASSKASTNNS. The disordered stretch occupies residues 280–367; that stretch reads ASSDISPSDS…PAPSIYDDLN (88 aa). Over residues 318-329 the composition is skewed to basic and acidic residues; that stretch reads GERDKAQERDRI. Residues 330 to 346 are compositionally biased toward low complexity; the sequence is AGSGSSGSSSQNALGLS.

Belongs to the SGF11 family. Component of some SAGA transcription coactivator-HAT complexes. Within the SAGA complex, participates in a subcomplex of SAGA called the DUB module (deubiquitination module).

It is found in the nucleus. Component of the transcription regulatory histone acetylation (HAT) complex SAGA, a multiprotein complex that activates transcription by remodeling chromatin and mediating histone acetylation and deubiquitination. Within the SAGA complex, participates in a subcomplex that specifically deubiquitinates histone H2B. The SAGA complex is recruited to specific gene promoters by activators, where it is required for transcription. This Danio rerio (Zebrafish) protein is Ataxin-7-like protein 3 (atxn7l3).